Here is an 860-residue protein sequence, read N- to C-terminus: Leucine--tRNA ligase (860 aa).

The short motif at 42-52 (PYPSGRLHMGH) is the 'HIGH' region element. Residues 619–623 (KMSKS) carry the 'KMSKS' region motif. Lys-622 is a binding site for ATP.

Belongs to the class-I aminoacyl-tRNA synthetase family.

The protein resides in the cytoplasm. The catalysed reaction is tRNA(Leu) + L-leucine + ATP = L-leucyl-tRNA(Leu) + AMP + diphosphate. The sequence is that of Leucine--tRNA ligase from Escherichia coli O45:K1 (strain S88 / ExPEC).